Reading from the N-terminus, the 186-residue chain is Elongation factor P (186 aa).

It belongs to the elongation factor P family.

The protein resides in the cytoplasm. It participates in protein biosynthesis; polypeptide chain elongation. In terms of biological role, involved in peptide bond synthesis. Stimulates efficient translation and peptide-bond synthesis on native or reconstituted 70S ribosomes in vitro. Probably functions indirectly by altering the affinity of the ribosome for aminoacyl-tRNA, thus increasing their reactivity as acceptors for peptidyl transferase. The protein is Elongation factor P of Prochlorococcus marinus subsp. pastoris (strain CCMP1986 / NIES-2087 / MED4).